The sequence spans 318 residues: Pheromone-regulated membrane protein 5 (318 aa).

The helical transmembrane segment at 78-98 (FIVVGGIAGVIFLAILLWWVI) threads the bilayer. Ser129 bears the Phosphoserine mark. Positions 238–247 (TISSSSASSL) are enriched in low complexity. The tract at residues 238–318 (TISSSSASSL…HMLEGKEQDE (81 aa)) is disordered. Basic and acidic residues predominate over residues 250 to 261 (GNEKEVGEDIRK). A compositionally biased stretch (polar residues) spans 276-285 (SPESDGSVNR). Ser279, Ser282, and Ser288 each carry phosphoserine. Positions 309 to 318 (HMLEGKEQDE) are enriched in basic and acidic residues. A Glycyl lysine isopeptide (Lys-Gly) (interchain with G-Cter in ubiquitin) cross-link involves residue Lys314.

It belongs to the PRM5 family.

It is found in the membrane. The sequence is that of Pheromone-regulated membrane protein 5 (PRM5) from Saccharomyces cerevisiae (strain Lalvin EC1118 / Prise de mousse) (Baker's yeast).